Reading from the N-terminus, the 352-residue chain is Ion-translocating oxidoreductase complex subunit D (352 aa).

The next 4 helical transmembrane spans lie at 20-40 (IMLL…WFFG), 42-62 (GTLV…ALVL), 89-109 (IPPL…VIIA), and 123-143 (PAMI…TSWL). Residue Thr187 is modified to FMN phosphoryl threonine. A run of 5 helical transmembrane segments spans residues 214–234 (ILAG…GVWL), 242–262 (WHIP…GWLF), 267–287 (LAAP…FFIL), 301–321 (LIFG…GGYP), and 322–342 (DGVA…DYYT).

The protein belongs to the NqrB/RnfD family. The complex is composed of six subunits: RsxA, RsxB, RsxC, RsxD, RsxE and RsxG. The cofactor is FMN.

Its subcellular location is the cell inner membrane. In terms of biological role, part of a membrane-bound complex that couples electron transfer with translocation of ions across the membrane. Required to maintain the reduced state of SoxR. The protein is Ion-translocating oxidoreductase complex subunit D of Escherichia coli O127:H6 (strain E2348/69 / EPEC).